We begin with the raw amino-acid sequence, 156 residues long: Small ribosomal subunit protein uS7 (156 aa).

This sequence belongs to the universal ribosomal protein uS7 family. In terms of assembly, part of the 30S ribosomal subunit. Contacts proteins S9 and S11.

In terms of biological role, one of the primary rRNA binding proteins, it binds directly to 16S rRNA where it nucleates assembly of the head domain of the 30S subunit. Is located at the subunit interface close to the decoding center, probably blocks exit of the E-site tRNA. This chain is Small ribosomal subunit protein uS7, found in Nitrosococcus oceani (strain ATCC 19707 / BCRC 17464 / JCM 30415 / NCIMB 11848 / C-107).